Reading from the N-terminus, the 61-residue chain is Large ribosomal subunit protein bL32 (61 aa).

It belongs to the bacterial ribosomal protein bL32 family.

The polypeptide is Large ribosomal subunit protein bL32 (Phytoplasma mali (strain AT)).